Consider the following 201-residue polypeptide: dITP/XTP pyrophosphatase (201 aa).

7–12 serves as a coordination point for substrate; it reads SNNAHK. The active-site Proton acceptor is aspartate 72. Aspartate 72 contributes to the Mg(2+) binding site. Residues serine 73, 154 to 157, lysine 177, and 182 to 183 each bind substrate; these read FGYD and HR.

Belongs to the HAM1 NTPase family. As to quaternary structure, homodimer. Mg(2+) is required as a cofactor.

It carries out the reaction XTP + H2O = XMP + diphosphate + H(+). It catalyses the reaction dITP + H2O = dIMP + diphosphate + H(+). The catalysed reaction is ITP + H2O = IMP + diphosphate + H(+). Functionally, pyrophosphatase that catalyzes the hydrolysis of nucleoside triphosphates to their monophosphate derivatives, with a high preference for the non-canonical purine nucleotides XTP (xanthosine triphosphate), dITP (deoxyinosine triphosphate) and ITP. Seems to function as a house-cleaning enzyme that removes non-canonical purine nucleotides from the nucleotide pool, thus preventing their incorporation into DNA/RNA and avoiding chromosomal lesions. The polypeptide is dITP/XTP pyrophosphatase (Leuconostoc mesenteroides subsp. mesenteroides (strain ATCC 8293 / DSM 20343 / BCRC 11652 / CCM 1803 / JCM 6124 / NCDO 523 / NBRC 100496 / NCIMB 8023 / NCTC 12954 / NRRL B-1118 / 37Y)).